The sequence spans 154 residues: Ascorbate-specific PTS system EIIA component (154 aa).

One can recognise a PTS EIIA type-2 domain in the interval 6 to 150; that stretch reads SLAENKSIRL…QEVLDLIDRT (145 aa). The Tele-phosphohistidine intermediate role is filled by His68. Phosphohistidine is present on His68.

It localises to the cytoplasm. The phosphoenolpyruvate-dependent sugar phosphotransferase system (sugar PTS), a major carbohydrate active transport system, catalyzes the phosphorylation of incoming sugar substrates concomitantly with their translocation across the cell membrane. The enzyme II UlaABC PTS system is involved in ascorbate transport. In Shigella flexneri, this protein is Ascorbate-specific PTS system EIIA component (ulaC).